Here is a 371-residue protein sequence, read N- to C-terminus: Opine oxidase subunit B (371 aa).

Heterodimer of a subunit A and a subunit B.

It functions in the pathway opine metabolism; octopine degradation. Functionally, oxidative cleavage of octopine into L-arginine and pyruvate. The chain is Opine oxidase subunit B (ooxB) from Rhizobium meliloti (Ensifer meliloti).